We begin with the raw amino-acid sequence, 368 residues long: Chaperone protein DnaJ (368 aa).

One can recognise a J domain in the interval 5–70; the sequence is DYYQVLGVPR…KKRKLYDTHG (66 aa). The segment at 124 to 201 adopts a CR-type zinc-finger fold; sequence GVERQIQIPT…CNGAGRVEDH (78 aa). Cys-137, Cys-140, Cys-153, Cys-156, Cys-175, Cys-178, Cys-189, and Cys-192 together coordinate Zn(2+). CXXCXGXG motif repeat units lie at residues 137–144, 153–160, 175–182, and 189–196; these read CTHCHGSG, CGTCRGSG, CPHCGGRG, and CKVCNGAG.

It belongs to the DnaJ family. In terms of assembly, homodimer. Zn(2+) is required as a cofactor.

It is found in the cytoplasm. Its function is as follows. Participates actively in the response to hyperosmotic and heat shock by preventing the aggregation of stress-denatured proteins and by disaggregating proteins, also in an autonomous, DnaK-independent fashion. Unfolded proteins bind initially to DnaJ; upon interaction with the DnaJ-bound protein, DnaK hydrolyzes its bound ATP, resulting in the formation of a stable complex. GrpE releases ADP from DnaK; ATP binding to DnaK triggers the release of the substrate protein, thus completing the reaction cycle. Several rounds of ATP-dependent interactions between DnaJ, DnaK and GrpE are required for fully efficient folding. Also involved, together with DnaK and GrpE, in the DNA replication of plasmids through activation of initiation proteins. This is Chaperone protein DnaJ from Xylella fastidiosa (strain 9a5c).